The sequence spans 239 residues: UDP-2,3-diacylglucosamine hydrolase (239 aa).

Mn(2+)-binding residues include Asp-8, His-10, Asp-41, Asn-78, and His-113. Substrate is bound at residue 78-79; that stretch reads NR. Residues Asp-121, Ser-159, Asn-163, Lys-166, and His-194 each coordinate substrate. Positions 194 and 196 each coordinate Mn(2+).

It belongs to the LpxH family. The cofactor is Mn(2+).

The protein localises to the cell inner membrane. The enzyme catalyses UDP-2-N,3-O-bis[(3R)-3-hydroxytetradecanoyl]-alpha-D-glucosamine + H2O = 2-N,3-O-bis[(3R)-3-hydroxytetradecanoyl]-alpha-D-glucosaminyl 1-phosphate + UMP + 2 H(+). The protein operates within glycolipid biosynthesis; lipid IV(A) biosynthesis; lipid IV(A) from (3R)-3-hydroxytetradecanoyl-[acyl-carrier-protein] and UDP-N-acetyl-alpha-D-glucosamine: step 4/6. Its function is as follows. Hydrolyzes the pyrophosphate bond of UDP-2,3-diacylglucosamine to yield 2,3-diacylglucosamine 1-phosphate (lipid X) and UMP by catalyzing the attack of water at the alpha-P atom. Involved in the biosynthesis of lipid A, a phosphorylated glycolipid that anchors the lipopolysaccharide to the outer membrane of the cell. This is UDP-2,3-diacylglucosamine hydrolase from Shewanella sp. (strain MR-7).